The sequence spans 878 residues: Bifunctional heparan sulfate N-deacetylase/N-sulfotransferase 1 (878 aa).

The Cytoplasmic portion of the chain corresponds to 1 to 17 (MSLSLKTRRFGRPVRPQ). The sufficient for localization to Golgi membrane stretch occupies residues 1 to 169 (MSLSLKTRRF…VEYGVGIIGF (169 aa)). A helical; Signal-anchor for type II membrane protein membrane pass occupies residues 18-38 (LVLLLLFALCLLSVFISAYYL). Residues 39 to 878 (YGWKRGLEPS…WLREELQSTR (840 aa)) lie on the Lumenal side of the membrane. The heparan sulfate N-deacetylase 1 stretch occupies residues 40 to 594 (GWKRGLEPSG…KRHKDIWSKE (555 aa)). A disordered region spans residues 47–71 (PSGSEAQSPDCDEPKISPSRLLPMK). Residues asparagine 231, asparagine 347, and asparagine 397 are each glycosylated (N-linked (GlcNAc...) asparagine). The tract at residues 595-878 (KTCDRFPKLL…WLREELQSTR (284 aa)) is heparan sulfate N-sulfotransferase 1. Lysine 610 (for sulfotransferase activity) is an active-site residue. Residue 610 to 614 (KTGTT) participates in adenosine 3',5'-bisphosphate binding. Asparagine 663 carries N-linked (GlcNAc...) asparagine glycosylation. Serine 708 and tryptophan 813 together coordinate adenosine 3',5'-bisphosphate. A disulfide bridge links cysteine 814 with cysteine 824. 829–833 (KGRKY) is a binding site for adenosine 3',5'-bisphosphate.

The protein belongs to the sulfotransferase 1 family. NDST subfamily. As to quaternary structure, monomer.

It localises to the golgi apparatus membrane. The protein resides in the golgi apparatus. It is found in the trans-Golgi network membrane. It carries out the reaction alpha-D-glucosaminyl-[heparan sulfate](n) + 3'-phosphoadenylyl sulfate = N-sulfo-alpha-D-glucosaminyl-[heparan sulfate](n) + adenosine 3',5'-bisphosphate + 2 H(+). It participates in glycan metabolism; heparan sulfate biosynthesis. It functions in the pathway glycan metabolism; heparin biosynthesis. Its function is as follows. Essential bifunctional enzyme that catalyzes both the N-deacetylation and the N-sulfation of glucosamine (GlcNAc) of the glycosaminoglycan in heparan sulfate. Modifies the GlcNAc-GlcA disaccharide repeating sugar backbone to make N-sulfated heparosan, a prerequisite substrate for later modifications in heparin biosynthesis. Plays a role in determining the extent and pattern of sulfation of heparan sulfate. The chain is Bifunctional heparan sulfate N-deacetylase/N-sulfotransferase 1 (ndst1) from Xenopus tropicalis (Western clawed frog).